The following is a 203-amino-acid chain: MAVPTGRALVFVTGNAKKLEEVVQILGDKFPYKLISKKIDLPEYQGEPDDISIQKCKEAARQVDGPVLVEDTCLCFRALEGLPGPYIKWFLDKLKPEGLYKMLAGFEDKSAWALCTFAFCAGKEEPVQLFRGITEGHIVEPRGPRDFGWDPCFQPEGYDKTYAELPKEVKNSISHRYRALAALSEHFCQDNGAPETKRSKHQD.

Residue 13–18 participates in ITP binding; the sequence is TGNAKK. Residue E43 coordinates Mg(2+). ITP-binding positions include K55, 71-72, K88, 147-150, K170, and 175-176; these read DT, FGWD, and HR.

Belongs to the HAM1 NTPase family. In terms of assembly, homodimer. Requires Mg(2+) as cofactor. Mn(2+) is required as a cofactor.

It localises to the cytoplasm. It catalyses the reaction ITP + H2O = IMP + diphosphate + H(+). The enzyme catalyses dITP + H2O = dIMP + diphosphate + H(+). It carries out the reaction XTP + H2O = XMP + diphosphate + H(+). The catalysed reaction is N(6)-hydroxy-dATP + H2O = N(6)-hydroxy-dAMP + diphosphate + H(+). Pyrophosphatase that hydrolyzes the non-canonical purine nucleotides inosine triphosphate (ITP), deoxyinosine triphosphate (dITP) as well as 2'-deoxy-N-6-hydroxylaminopurine triphosphate (dHAPTP) and xanthosine 5'-triphosphate (XTP) to their respective monophosphate derivatives. The enzyme does not distinguish between the deoxy- and ribose forms. Probably excludes non-canonical purines from RNA and DNA precursor pools, thus preventing their incorporation into RNA and DNA and avoiding chromosomal lesions. This chain is Inosine triphosphate pyrophosphatase (itpa), found in Danio rerio (Zebrafish).